The primary structure comprises 129 residues: QVPFAPRPVIPGAFVPIVSQNFDLNGVDGSYTFSYESADGSARQESGVVNAPGTPLEAQAVQGSYTYVGTDGVPVQVNYVADENGFQPVGNVVAPAISRAVAAQVAQARAEGPILPGVPTPIPFRGRPF.

Position 1 is a pyrrolidone carboxylic acid (Gln1). In terms of domain architecture, Chitin-binding type R&amp;R spans 28-98; sequence DGSYTFSYES…VGNVVAPAIS (71 aa). The O-linked (HexNAc...) threonine glycan is linked to Thr120.

Component of the abdominal endocuticle. This chain is Endocuticle structural glycoprotein SgAbd-9, found in Schistocerca gregaria (Desert locust).